The following is a 1036-amino-acid chain: Nitrogen catabolic enzyme regulatory protein (1036 aa).

Residues 1-17 are compositionally biased toward low complexity; sequence MAASTTTPTATTRPFFT. 7 disordered regions span residues 1–126, 207–240, 256–298, 318–351, 590–743, 792–976, and 1000–1028; these read MAAS…HTQS, TDRT…SQGS, TPAG…QSQH, GYLP…HVSA, SSQG…PTTC, RGSG…PTTQ, and GMPN…TGAE. Basic and acidic residues predominate over residues 23–34; the sequence is TEHDFRFPRRPG. Residues 45–56 show a composition bias toward low complexity; the sequence is AAMSSSSANNNH. Tandem repeats lie at residues 49-55, 87-92, and 105-110. The 3 X approximate repeats stretch occupies residues 49 to 110; it reads SSSANNNHNQ…INHQSSSNNN (62 aa). Over residues 100–114 the composition is skewed to low complexity; sequence NINHQSSSNNNISKN. The segment covering 652–661 has biased composition (polar residues); the sequence is PRSQSQSFRQ. A compositionally biased stretch (low complexity) spans 703–714; sequence SSGLSSVPASRP. Polar residues predominate over residues 723–736; the sequence is QGSTTNLQGAAGNS. Residues 743–767 form a GATA-type zinc finger; that stretch reads CTNCFTQTTPLWRRNPDGQPLCNAC. Over residues 802 to 827 the composition is skewed to polar residues; it reads GTSTRSKKNASMSAAARKNSTLSITS. Low complexity-rich tracts occupy residues 828–861 and 868–899; these read NANN…ASGP and AGST…SAPP. Positions 927-961 are enriched in polar residues; sequence SAGSDQPVSAGAVSSSGMDVDSPANSTGSNETMPT. The span at 1000-1023 shows a compositional bias: low complexity; sequence GMPNGQAGQMMGASSSSGPGSGPS.

In terms of assembly, interacts with nmr.

The protein localises to the nucleus. Functionally, major nitrogen regulatory protein. During conditions of nitrogen limitation it turns on the expression of genes for enzymes which are required for the use of a variety of secondary nitrogen sources, including nitrates, purines, amino acids, and proteins. This Neurospora crassa (strain ATCC 24698 / 74-OR23-1A / CBS 708.71 / DSM 1257 / FGSC 987) protein is Nitrogen catabolic enzyme regulatory protein (nit-2).